The chain runs to 225 residues: Uridylate kinase (225 aa).

9–10 is a binding site for ATP; that stretch reads GS. Gly46 contacts UMP. Gly47 and Arg51 together coordinate ATP. UMP contacts are provided by residues Asp67 and 115–121; that span reads THPAHTT. Positions 141, 142, 147, and 150 each coordinate ATP.

It belongs to the UMP kinase family. Homohexamer.

It is found in the cytoplasm. The enzyme catalyses UMP + ATP = UDP + ADP. The protein operates within pyrimidine metabolism; CTP biosynthesis via de novo pathway; UDP from UMP (UMPK route): step 1/1. With respect to regulation, inhibited by UTP. Functionally, catalyzes the reversible phosphorylation of UMP to UDP. This chain is Uridylate kinase, found in Methanococcus maripaludis (strain C7 / ATCC BAA-1331).